The primary structure comprises 238 residues: uncharacterized protein (238 aa).

2 disordered regions span residues 123–167 and 180–238; these read FRQG…VHGG and SAMG…AKRR. Over residues 152-161 the composition is skewed to low complexity; it reads SGHSPSPGRH. Over residues 207-238 the composition is skewed to basic residues; it reads HRGHGHRFRLLAPRSRPRQRRGGGSRAAAKRR.

It belongs to the PNP/MTAP phosphorylase family.

This is an uncharacterized protein from Rhodospirillum rubrum.